Consider the following 1058-residue polypeptide: Ubiquitin-like modifier-activating enzyme 1 (1058 aa).

A disordered region spans residues M1 to S46. S2 carries the post-translational modification N-acetylserine. Phosphoserine is present on residues S4, S13, S21, S24, and S46. The segment covering S24–V36 has biased composition (low complexity). Y55 carries the phosphotyrosine modification. 2 tandem repeats follow at residues G63 to F199 and G459 to I611. The tract at residues G63 to I611 is 2 approximate repeats. Residues A478, D504, R515, K528, and D576–N577 contribute to the ATP site. An N6-succinyllysine modification is found at K528. The active-site Glycyl thioester intermediate is the C632. K671 carries the N6-acetyllysine modification. The residue at position 800 (T800) is a Phosphothreonine. A phosphoserine mark is found at S810, S816, S820, and S835. K980 is modified (N6-acetyllysine).

It belongs to the ubiquitin-activating E1 family. Monomer. Interacts with GAN (via BTB domain). In terms of processing, ISGylated.

It localises to the cytoplasm. The protein localises to the mitochondrion. It is found in the nucleus. It carries out the reaction ATP + ubiquitin + [E1 ubiquitin-activating enzyme]-L-cysteine = AMP + diphosphate + S-ubiquitinyl-[E1 ubiquitin-activating enzyme]-L-cysteine.. It functions in the pathway protein modification; protein ubiquitination. Catalyzes the first step in ubiquitin conjugation to mark cellular proteins for degradation through the ubiquitin-proteasome system. Activates ubiquitin by first adenylating its C-terminal glycine residue with ATP, and thereafter linking this residue to the side chain of a cysteine residue in E1, yielding a ubiquitin-E1 thioester and free AMP. Essential for the formation of radiation-induced foci, timely DNA repair and for response to replication stress. Promotes the recruitment of TP53BP1 and BRCA1 at DNA damage sites. In Rattus norvegicus (Rat), this protein is Ubiquitin-like modifier-activating enzyme 1.